Reading from the N-terminus, the 211-residue chain is Thymidylate kinase (211 aa).

ATP is bound at residue 10–17; the sequence is GVEGCGKT.

Belongs to the thymidylate kinase family.

It carries out the reaction dTMP + ATP = dTDP + ADP. In terms of biological role, phosphorylation of dTMP to form dTDP in both de novo and salvage pathways of dTTP synthesis. In Nostoc sp. (strain PCC 7120 / SAG 25.82 / UTEX 2576), this protein is Thymidylate kinase.